The sequence spans 5087 residues: Nonribosomal peptide synthetase sidC (5087 aa).

Positions 165 to 563 (HEMVRHTGNE…NGELQCMGRI (399 aa)) are adenylation 1. The Carrier 1 domain maps to 671–744 (EPAGDIEQKI…KMAALVLKSQ (74 aa)). At Ser-705 the chain carries O-(pantetheine 4'-phosphoryl)serine. The interval 782–1112 (DIIPCSPIQT…LFDTLFVWQD (331 aa)) is condensation 1. Residues 1217 to 1611 (ELAKTDSERI…GRRDDLVKIR (395 aa)) form an adenylation 2 region. The region spanning 1740 to 1817 (ENLTDNEAKV…RLTRKISQSI (78 aa)) is the Carrier 2 domain. O-(pantetheine 4'-phosphoryl)serine is present on Ser-1777. Residues 1855–2272 (KILPCTSLQE…RVMDFSLVES (418 aa)) are condensation 2. Residues 2302–2378 (EEWSAESLEI…EIASVLQGSK (77 aa)) enclose the Carrier 3 domain. Ser-2339 is subject to O-(pantetheine 4'-phosphoryl)serine. Residues 2419-2831 (PCTTPQAGML…STSSSLDTAS (413 aa)) form a condensation 3 region. Residues 2860 to 3258 (ATRHPSRVAL…GRIDDQVKLR (399 aa)) form an adenylation 3 region. The Carrier 4 domain maps to 3387–3464 (TEDTDTIRKI…LLAKAVESPD (78 aa)). At Ser-3424 the chain carries O-(pantetheine 4'-phosphoryl)serine. Residues 3506–3910 (ITPCTSLQDG…RSLVEEPFSN (405 aa)) are condensation 4. Residues 3943-4019 (FQWSQAASLL…TMMAEVTVNG (77 aa)) enclose the Carrier 5 domain. An O-(pantetheine 4'-phosphoryl)serine modification is found at Ser-3980. Positions 4051–4416 (EHIYPATPLQ…EYSICVELEA (366 aa)) are condensation 5. The Carrier 6 domain occupies 4496 to 4569 (SLLEERIRDT…KMAEIVNSAR (74 aa)). Position 4530 is an O-(pantetheine 4'-phosphoryl)serine (Ser-4530). Residues 4610–4913 (FLPATAGQVY…IQSDLHEIGS (304 aa)) form a condensation 6 region. A disordered region spans residues 5013–5048 (DVYKVSPPGSQLSQDSPEKQEANNKPSPQPSVDIEA).

The protein belongs to the NRP synthetase family.

The protein operates within siderophore biosynthesis. Functionally, nonribosomal peptide synthetase; part of the siderophore biosynthetic pathway. Arthroderma benhamiae produces 2 types of extracellular siderophores, ferrichrome C and ferricrocin. The biosynthesis of these siderophores depends on the hydroxylation of ornithine to N(5)-hydroxyornithine, catalyzed by the monooxygenase sidA. The structure of ferricrocin differs from ferrichrome C only by a serine for alanine substitution and the assembly of both siderophores is suggested to be performed by the nonribosomal peptide synthase (NRPS) sidC. In Arthroderma benhamiae (strain ATCC MYA-4681 / CBS 112371) (Trichophyton mentagrophytes), this protein is Nonribosomal peptide synthetase sidC.